Here is a 211-residue protein sequence, read N- to C-terminus: MATHERRVVFFDLDGTLHQQDMFGSFLRYLLRRQPLNALLVLPLLPIIAIALLIKGRAARWPMSLLLWGCTFGHSEARLQTLQADFVRWFRDNVTAFPLVQERLTTYLLSSDADIWLITGSPQPLVEAVYFDTPWLPRVNLIASQIQRGYGGWVLTMRCLGHEKVAQLERKIGTPLRLYSGYSDSNQDNPLLYFCQHRWRVTPRGELQQLE.

At 1 to 33 (MATHERRVVFFDLDGTLHQQDMFGSFLRYLLRR) the chain is on the cytoplasmic side. Residues 34 to 54 (QPLNALLVLPLLPIIAIALLI) form a helical membrane-spanning segment. The Periplasmic segment spans residues 55-211 (KGRAARWPMS…TPRGELQQLE (157 aa)).

Mg(2+) serves as cofactor.

It localises to the cell inner membrane. It carries out the reaction a 1,2-diacyl-sn-glycero-3-phospho-(1'-sn-glycero-3'-phosphate) + H2O = a 1,2-diacyl-sn-glycero-3-phospho-(1'-sn-glycerol) + phosphate. It participates in phospholipid metabolism; phosphatidylglycerol biosynthesis; phosphatidylglycerol from CDP-diacylglycerol: step 2/2. Functionally, lipid phosphatase which dephosphorylates phosphatidylglycerophosphate (PGP) to phosphatidylglycerol (PG). The polypeptide is Phosphatidylglycerophosphatase C (pgpC) (Escherichia coli (strain K12)).